The following is a 372-amino-acid chain: Probable butyrate kinase (372 aa).

It belongs to the acetokinase family.

It is found in the cytoplasm. The catalysed reaction is butanoate + ATP = butanoyl phosphate + ADP. This Oleidesulfovibrio alaskensis (strain ATCC BAA-1058 / DSM 17464 / G20) (Desulfovibrio alaskensis) protein is Probable butyrate kinase.